The sequence spans 61 residues: Short neurotoxin 2 (61 aa).

Intrachain disulfides connect cysteine 3–cysteine 23, cysteine 17–cysteine 40, cysteine 42–cysteine 53, and cysteine 54–cysteine 59.

It belongs to the three-finger toxin family. Short-chain subfamily. Type I alpha-neurotoxin sub-subfamily. In terms of tissue distribution, expressed by the venom gland.

It localises to the secreted. In terms of biological role, binds to muscle nicotinic acetylcholine receptor (nAChR) and inhibit acetylcholine from binding to the receptor, thereby impairing neuromuscular transmission. The sequence is that of Short neurotoxin 2 from Hemachatus haemachatus (Rinkhals).